The sequence spans 175 residues: Transcriptional regulator GadE (175 aa).

Residues 109–174 (HKNSQLCFSH…DIVTLGITSY (66 aa)) form the HTH luxR-type domain. The H-T-H motif DNA-binding region spans 133–152 (ESNITSTLNISQQTLKIQKF).

In terms of biological role, regulates the expression of several genes involved in acid resistance. Required for the expression of gadA and gadBC, among others, regardless of media or growth conditions. Binds directly to the 20 bp GAD box found in the control regions of both loci. Could be involved in the regulation of the genes coding for the type III secretion system in enterohaemorragic strains. This is Transcriptional regulator GadE (gadE) from Escherichia coli O157:H7.